The following is a 277-amino-acid chain: Undecaprenyl-diphosphatase (277 aa).

Transmembrane regions (helical) follow at residues 11 to 31 (WWQA…PISS), 47 to 67 (AGAS…LIYF), 96 to 116 (VGIL…KAIW), 123 to 143 (LWVI…AEQT), 153 to 173 (LGIW…IPGV), 197 to 217 (SFLL…ISEF), 227 to 247 (LGTL…IQFL), and 254 to 274 (LFIV…ALGF).

Belongs to the UppP family.

It localises to the cell inner membrane. The catalysed reaction is di-trans,octa-cis-undecaprenyl diphosphate + H2O = di-trans,octa-cis-undecaprenyl phosphate + phosphate + H(+). In terms of biological role, catalyzes the dephosphorylation of undecaprenyl diphosphate (UPP). Confers resistance to bacitracin. This chain is Undecaprenyl-diphosphatase, found in Synechococcus sp. (strain JA-2-3B'a(2-13)) (Cyanobacteria bacterium Yellowstone B-Prime).